The following is a 320-amino-acid chain: MTEYFWAFTRAFIVTVIFMPAVIKFLKQSKEQAVIRKLGPDHQSKAGTPSMGGALFIAAASLSALIGSVAYSGKIGFVMVLIPILAVVAYAIIGGIDDALKMIHHADDGFRFIPKLLAQTLCAVVIMIIMWIMQIPLILNIPFIGVFNLGIFYFIFLWFWLVGWSNATNLTDGLDGLLTGTSLIVYLVYTWIALGVHNHIIVIFNASIIGALVGFLLFNKPKAKIFMGDTGSLALGAGLAIESIVLGIPFSLLWFGLIFVIETLSVVIQTIGYHFWKKRIFPMAPIHHSFEKFGWNEWQIDALFWIVTAIIGIIGILYMS.

The next 9 helical transmembrane spans lie at 5–25 (FWAFTRAFIVTVIFMPAVIKF), 51–71 (MGGALFIAAASLSALIGSVAY), 75–95 (IGFVMVLIPILAVVAYAIIGG), 121–141 (LCAVVIMIIMWIMQIPLILNI), 143–163 (FIGVFNLGIFYFIFLWFWLVG), 176–196 (GLLTGTSLIVYLVYTWIALGV), 198–218 (NHIIVIFNASIIGALVGFLLF), 241–261 (IESIVLGIPFSLLWFGLIFVI), and 300–320 (IDALFWIVTAIIGIIGILYMS).

Belongs to the glycosyltransferase 4 family. MraY subfamily. Mg(2+) serves as cofactor.

The protein localises to the cell membrane. It catalyses the reaction UDP-N-acetyl-alpha-D-muramoyl-L-alanyl-gamma-D-glutamyl-L-lysyl-D-alanyl-D-alanine + di-trans,octa-cis-undecaprenyl phosphate = Mur2Ac(oyl-L-Ala-gamma-D-Glu-L-Lys-D-Ala-D-Ala)-di-trans,octa-cis-undecaprenyl diphosphate + UMP. It functions in the pathway cell wall biogenesis; peptidoglycan biosynthesis. In terms of biological role, catalyzes the initial step of the lipid cycle reactions in the biosynthesis of the cell wall peptidoglycan: transfers peptidoglycan precursor phospho-MurNAc-pentapeptide from UDP-MurNAc-pentapeptide onto the lipid carrier undecaprenyl phosphate, yielding undecaprenyl-pyrophosphoryl-MurNAc-pentapeptide, known as lipid I. The chain is Phospho-N-acetylmuramoyl-pentapeptide-transferase from Leuconostoc mesenteroides subsp. mesenteroides (strain ATCC 8293 / DSM 20343 / BCRC 11652 / CCM 1803 / JCM 6124 / NCDO 523 / NBRC 100496 / NCIMB 8023 / NCTC 12954 / NRRL B-1118 / 37Y).